A 182-amino-acid polypeptide reads, in one-letter code: Adenine phosphoribosyltransferase (182 aa).

Belongs to the purine/pyrimidine phosphoribosyltransferase family. In terms of assembly, homodimer.

The protein localises to the cytoplasm. It carries out the reaction AMP + diphosphate = 5-phospho-alpha-D-ribose 1-diphosphate + adenine. It functions in the pathway purine metabolism; AMP biosynthesis via salvage pathway; AMP from adenine: step 1/1. In terms of biological role, catalyzes a salvage reaction resulting in the formation of AMP, that is energically less costly than de novo synthesis. This chain is Adenine phosphoribosyltransferase, found in Sulfurimonas denitrificans (strain ATCC 33889 / DSM 1251) (Thiomicrospira denitrificans (strain ATCC 33889 / DSM 1251)).